The primary structure comprises 154 residues: Small ribosomal subunit protein uS9 (154 aa).

Disordered regions lie at residues 1–33 and 115–154; these read MVPP…SGLG and PENN…YSKR. Basic residues predominate over residues 135-154; sequence KERKKAGLKKARKAPQYSKR.

Belongs to the universal ribosomal protein uS9 family.

This Tropheryma whipplei (strain TW08/27) (Whipple's bacillus) protein is Small ribosomal subunit protein uS9.